Reading from the N-terminus, the 505-residue chain is Protein disulfide-isomerase A3 (505 aa).

Residues 1–24 (MSVPRPSRAALLLLVPLLALSAGA) form the signal peptide. 2 consecutive Thioredoxin domains span residues 25–131 (SDVV…KQAG) and 341–483 (SRDG…REAT). Active-site nucleophile residues include cysteine 55 and cysteine 58. Cystine bridges form between cysteine 55-cysteine 58, cysteine 83-cysteine 90, and cysteine 404-cysteine 407. Catalysis depends on nucleophile residues cysteine 404 and cysteine 407. The disordered stretch occupies residues 486-505 (PVLQEEDKAKKSKKKAKEDL). Over residues 495 to 505 (KKSKKKAKEDL) the composition is skewed to basic residues. Residues 502 to 505 (KEDL) carry the Prevents secretion from ER motif.

Belongs to the protein disulfide isomerase family.

The protein localises to the endoplasmic reticulum. It is found in the endoplasmic reticulum lumen. It localises to the melanosome. The catalysed reaction is Catalyzes the rearrangement of -S-S- bonds in proteins.. Protein disulfide isomerase that catalyzes the formation, isomerization, and reduction or oxidation of disulfide bonds in client proteins and functions as a protein folding chaperone. This is Protein disulfide-isomerase A3 (PDIA3) from Gallus gallus (Chicken).